The following is a 228-amino-acid chain: Probable transcriptional regulatory protein SilR (228 aa).

A Response regulatory domain is found at 2 to 116 (KILIVEDDIK…ELLARVRTLL (115 aa)). The residue at position 51 (Asp-51) is a 4-aspartylphosphate. Residues 125–225 (ESQLKVADLS…VRGVGYMLEI (101 aa)) constitute a DNA-binding region (ompR/PhoB-type).

Phosphorylated by SilS.

The protein resides in the cytoplasm. Functionally, component of the sil cation-efflux system that confers resistance to silver. Probable member of a two-component regulatory system SilS/SilR. The sequence is that of Probable transcriptional regulatory protein SilR (silR) from Salmonella typhimurium.